The sequence spans 1127 residues: uncharacterized protein (1127 aa).

A signal peptide spans 1–26; it reads MRIHQRSAPCVPVLLFLFLPSAPLCA. The disordered stretch occupies residues 533–600; the sequence is ETESLSPPAD…ASSSPSEMAV (68 aa). Low complexity-rich tracts occupy residues 536-549 and 583-599; these read SLSP…TPSP and AGAS…SEMA. A coiled-coil region spans residues 1076–1126; that stretch reads SEDEKEYQRALQELQKGNKLVASAVVEQLLQKDRNKKSAKIQQLKKRIDAQ.

This is an uncharacterized protein from Treponema pallidum (strain Nichols).